Reading from the N-terminus, the 872-residue chain is Alanine--tRNA ligase (872 aa).

Histidine 567, histidine 571, cysteine 669, and histidine 673 together coordinate Zn(2+).

This sequence belongs to the class-II aminoacyl-tRNA synthetase family. Zn(2+) is required as a cofactor.

The protein resides in the cytoplasm. It carries out the reaction tRNA(Ala) + L-alanine + ATP = L-alanyl-tRNA(Ala) + AMP + diphosphate. In terms of biological role, catalyzes the attachment of alanine to tRNA(Ala) in a two-step reaction: alanine is first activated by ATP to form Ala-AMP and then transferred to the acceptor end of tRNA(Ala). Also edits incorrectly charged Ser-tRNA(Ala) and Gly-tRNA(Ala) via its editing domain. In Streptococcus pneumoniae serotype 4 (strain ATCC BAA-334 / TIGR4), this protein is Alanine--tRNA ligase.